The chain runs to 289 residues: Aquaporin-2 (289 aa).

Residues methionine 1–arginine 36 are disordered. At methionine 1–histidine 47 the chain is on the cytoplasmic side. The chain crosses the membrane as a helical span at residues phenylalanine 48–isoleucine 68. Over cysteine 69 to leucine 90 the chain is Extracellular. The helical transmembrane segment at isoleucine 91–valine 111 threads the bilayer. Topologically, residues serine 112–cysteine 135 are cytoplasmic. An NPA 1 motif is present at residues asparagine 117–alanine 119. Residues valine 136 to methionine 156 traverse the membrane as a helical segment. Over threonine 157–arginine 175 the chain is Extracellular. Residues glycine 176 to valine 196 form a helical membrane-spanning segment. Topologically, residues glutamate 197–asparagine 202 are cytoplasmic. A helical transmembrane segment spans residues phenylalanine 203–tyrosine 223. Topologically, residues threonine 224–histidine 247 are extracellular. The NPA 2 signature appears at asparagine 229 to alanine 231. A helical transmembrane segment spans residues tryptophan 248–leucine 268. Residues glutamine 269 to aspartate 289 are Cytoplasmic-facing.

Belongs to the MIP/aquaporin (TC 1.A.8) family.

Its subcellular location is the endoplasmic reticulum membrane. It localises to the cell membrane. Water channel required to facilitate the transport of water across membranes. Involved in freeze tolerance, osmotolerance and cell flocculation in liquid cultures. Is non-functional in most laboratory strains. The sequence is that of Aquaporin-2 (AQY2) from Saccharomyces cerevisiae (Baker's yeast).